A 437-amino-acid chain; its full sequence is tRNA-2-methylthio-N(6)-dimethylallyladenosine synthase (437 aa).

The MTTase N-terminal domain occupies 1 to 117 (MKFYIKTFGC…LPNLLEEAKS (117 aa)). Residues cysteine 10, cysteine 46, cysteine 80, cysteine 156, cysteine 160, and cysteine 163 each contribute to the [4Fe-4S] cluster site. Residues 142 to 371 (RENKYTAFVT…INLQKDITFK (230 aa)) enclose the Radical SAM core domain. The region spanning 374 to 435 (LEYQDKIVEI…RFSLEGSIIG (62 aa)) is the TRAM domain.

This sequence belongs to the methylthiotransferase family. MiaB subfamily. In terms of assembly, monomer. [4Fe-4S] cluster is required as a cofactor.

It is found in the cytoplasm. The enzyme catalyses N(6)-dimethylallyladenosine(37) in tRNA + (sulfur carrier)-SH + AH2 + 2 S-adenosyl-L-methionine = 2-methylsulfanyl-N(6)-dimethylallyladenosine(37) in tRNA + (sulfur carrier)-H + 5'-deoxyadenosine + L-methionine + A + S-adenosyl-L-homocysteine + 2 H(+). Catalyzes the methylthiolation of N6-(dimethylallyl)adenosine (i(6)A), leading to the formation of 2-methylthio-N6-(dimethylallyl)adenosine (ms(2)i(6)A) at position 37 in tRNAs that read codons beginning with uridine. This chain is tRNA-2-methylthio-N(6)-dimethylallyladenosine synthase, found in Sulfurihydrogenibium sp. (strain YO3AOP1).